Reading from the N-terminus, the 430-residue chain is Adenylosuccinate synthetase (430 aa).

Residues 13 to 19 and 41 to 43 each bind GTP; these read GDEGKGK and GHT. Catalysis depends on aspartate 14, which acts as the Proton acceptor. Residues aspartate 14 and glycine 41 each contribute to the Mg(2+) site. IMP contacts are provided by residues 14–17, 39–42, threonine 130, arginine 144, glutamine 225, threonine 240, and arginine 304; these read DEGK and NAGH. Residue histidine 42 is the Proton donor of the active site. A substrate-binding site is contributed by 300–306; it reads ATTGRAR. GTP contacts are provided by residues arginine 306, 332–334, and 414–416; these read KLD and STG.

This sequence belongs to the adenylosuccinate synthetase family. As to quaternary structure, homodimer. It depends on Mg(2+) as a cofactor.

The protein resides in the cytoplasm. It carries out the reaction IMP + L-aspartate + GTP = N(6)-(1,2-dicarboxyethyl)-AMP + GDP + phosphate + 2 H(+). The protein operates within purine metabolism; AMP biosynthesis via de novo pathway; AMP from IMP: step 1/2. In terms of biological role, plays an important role in the de novo pathway of purine nucleotide biosynthesis. Catalyzes the first committed step in the biosynthesis of AMP from IMP. In Pseudomonas aeruginosa (strain LESB58), this protein is Adenylosuccinate synthetase.